A 356-amino-acid polypeptide reads, in one-letter code: Histidinol-phosphate aminotransferase (356 aa).

N6-(pyridoxal phosphate)lysine is present on K214.

Belongs to the class-II pyridoxal-phosphate-dependent aminotransferase family. Histidinol-phosphate aminotransferase subfamily. As to quaternary structure, homodimer. The cofactor is pyridoxal 5'-phosphate.

The catalysed reaction is L-histidinol phosphate + 2-oxoglutarate = 3-(imidazol-4-yl)-2-oxopropyl phosphate + L-glutamate. It functions in the pathway amino-acid biosynthesis; L-histidine biosynthesis; L-histidine from 5-phospho-alpha-D-ribose 1-diphosphate: step 7/9. This Escherichia coli O9:H4 (strain HS) protein is Histidinol-phosphate aminotransferase.